A 294-amino-acid chain; its full sequence is Protein huluwa (294 aa).

Residues 1-23 (MSQLGSAVPSSNLPEGLPVSSLA) lie on the Extracellular side of the membrane. A helical membrane pass occupies residues 24 to 44 (LLILVLIPCVLLLLLLNCLFV). Topologically, residues 45–294 (GYKLFRMTRR…PPITTKQYWV (250 aa)) are cytoplasmic. The disordered stretch occupies residues 154 to 175 (SDSDMERVNTVPPNSPVLRVTP). The VPPNSP motif motif lies at 164-169 (VPPNSP). The short motif at 184 to 190 (SLRRSST) is the SLRRSST motif element.

Belongs to the huluwa family. In terms of assembly, interacts with axin1; leading to promote the tankyrase-mediated degradation of axin. Interacts with axin2; leading to promote the tankyrase-mediated degradation of axin.

The protein resides in the cell membrane. Key maternal determinant of the dorsal organizer and body axis formation in vertebrates that acts by promoting stabilization of beta-catenin (ctnnb1). Localizes on the plasma membrane of the future dorsal blastomeres in early blastulas and binds to and promotes the tankyrase-mediated degradation of axin (axin1 and axin2). Axin degradation results in stabilization and nuclear translocation of beta-catenin (ctnnb1) for activating organizer-specific target gene expression. The chain is Protein huluwa from Danio rerio (Zebrafish).